We begin with the raw amino-acid sequence, 910 residues long: Staphylococcal nuclease domain-containing protein 1 (910 aa).

N-acetylalanine is present on Ala2. 3 consecutive TNase-like domains span residues Thr18 to Glu166, Lys193 to Asp328, and Lys341 to Lys496. Phosphothreonine is present on Thr103. Position 193 is an N6-acetyllysine (Lys193). Thr235 and Thr240 each carry phosphothreonine. 2 short sequence motifs (nuclear localization signal) span residues Arg321–Ile325 and Lys388–Pro392. The residue at position 426 (Ser426) is a Phosphoserine. Lys513 is covalently cross-linked (Glycyl lysine isopeptide (Lys-Gly) (interchain with G-Cter in SUMO2)). The 136-residue stretch at Gly525–His660 folds into the TNase-like 4 domain. Lys641 bears the N6-acetyllysine mark. A Phosphoserine modification is found at Ser645. One can recognise a Tudor domain in the interval Ala729–Arg787. Thr779 is modified (phosphothreonine). Ser785 and Ser909 each carry phosphoserine.

In terms of assembly, forms a ternary complex with STAT6 and POLR2A. Associates with the RNA-induced silencing complex (RISC). Interacts with the RISC components AGO2, FMR1 and TNRC6A. Interacts with GTF2E1 and GTF2E2. Interacts with PIM1. Interacts with STAT5. Interacts with SYT11 (via C2 2 domain); the interaction with SYT11 is direct. Phosphorylated by PIM1 in vitro.

Its subcellular location is the cytoplasm. It localises to the nucleus. The protein resides in the melanosome. The catalysed reaction is Endonucleolytic cleavage to nucleoside 3'-phosphates and 3'-phosphooligonucleotide end-products.. In terms of biological role, endonuclease that mediates miRNA decay of both protein-free and AGO2-loaded miRNAs. As part of its function in miRNA decay, regulates mRNAs involved in G1-to-S phase transition. Functions as a bridging factor between STAT6 and the basal transcription factor. Plays a role in PIM1 regulation of MYB activity. Functions as a transcriptional coactivator for STAT5. In Mus musculus (Mouse), this protein is Staphylococcal nuclease domain-containing protein 1 (Snd1).